The chain runs to 400 residues: Arabinan endo-1,5-alpha-L-arabinosidase B (400 aa).

The first 16 residues, 1 to 16 (MAVIFVLFFLVSMALS), serve as a signal peptide directing secretion. An N-linked (GlcNAc...) asparagine glycan is attached at Asn24. Asp70 functions as the Proton acceptor in the catalytic mechanism. The N-linked (GlcNAc...) asparagine glycan is linked to Asn184. The active-site Proton donor is the Glu277. Asn372 carries N-linked (GlcNAc...) asparagine glycosylation.

The protein belongs to the glycosyl hydrolase 43 family.

The protein localises to the secreted. It catalyses the reaction Endohydrolysis of (1-&gt;5)-alpha-arabinofuranosidic linkages in (1-&gt;5)-arabinans.. Its pathway is glycan metabolism; L-arabinan degradation. In terms of biological role, endo-1,5-alpha-L-arabinanase involved in degradation of pectin. Its preferred substrate is linear 1,5-alpha-L-arabinan. The protein is Arabinan endo-1,5-alpha-L-arabinosidase B (abnB) of Emericella nidulans (strain FGSC A4 / ATCC 38163 / CBS 112.46 / NRRL 194 / M139) (Aspergillus nidulans).